The chain runs to 459 residues: Cell division protein FtsZ (459 aa).

GTP-binding positions include 25-29, 112-114, Glu143, Arg147, and Asp191; these read GAGSN and GTG. Disordered regions lie at residues 383–405 and 427–459; these read DQAPNSTNDDMEPRVSLTNDAGE and IPERKNVVVGMPDEETKESDIHDIPAFLRKKRD.

This sequence belongs to the FtsZ family. In terms of assembly, homodimer. Polymerizes to form a dynamic ring structure in a strictly GTP-dependent manner. Interacts directly with several other division proteins.

The protein resides in the cytoplasm. In terms of biological role, essential cell division protein that forms a contractile ring structure (Z ring) at the future cell division site. The regulation of the ring assembly controls the timing and the location of cell division. One of the functions of the FtsZ ring is to recruit other cell division proteins to the septum to produce a new cell wall between the dividing cells. Binds GTP and shows GTPase activity. In Rickettsia bellii (strain RML369-C), this protein is Cell division protein FtsZ.